A 221-amino-acid polypeptide reads, in one-letter code: Penicillin-binding protein activator LpoB (221 aa).

A signal peptide spans 1-20 (MLNRMYRYALLATVALALSG). Cys21 carries N-palmitoyl cysteine lipidation. Cys21 carries S-diacylglycerol cysteine lipidation. Positions 29-82 (PAPVEEAQPGTQQPTQPVPPPTQPVPTVPSVPSIPAQPGPIEHQPENATPEPKA) are disordered. A compositionally biased stretch (pro residues) spans 44–57 (QPVPPPTQPVPTVP).

Belongs to the LpoB family. In terms of assembly, interacts with PBP1b.

Its subcellular location is the cell outer membrane. In terms of biological role, regulator of peptidoglycan synthesis that is essential for the function of penicillin-binding protein 1B (PBP1b). The protein is Penicillin-binding protein activator LpoB of Cronobacter turicensis (strain DSM 18703 / CCUG 55852 / LMG 23827 / z3032).